Consider the following 78-residue polypeptide: uncharacterized protein (78 aa).

This is an uncharacterized protein from Plasmodium falciparum (isolate fcm17 / Senegal).